A 421-amino-acid polypeptide reads, in one-letter code: Probable sugar-binding periplasmic protein (421 aa).

A signal peptide spans 1-27 (MHKLLKLAAMGTAACALLAGMAPVANA).

Belongs to the bacterial solute-binding protein 1 family.

The protein localises to the periplasm. In terms of biological role, part of a binding-protein-dependent transport system for a sugar. In Brucella melitensis biotype 1 (strain ATCC 23456 / CCUG 17765 / NCTC 10094 / 16M), this protein is Probable sugar-binding periplasmic protein.